Here is a 113-residue protein sequence, read N- to C-terminus: Beta-microseminoprotein (113 aa).

The N-terminal stretch at 1-20 is a signal peptide; the sequence is MKARLGSLLVLATLVTASNA. 5 cysteine pairs are disulfide-bonded: Cys-22-Cys-69, Cys-38-Cys-61, Cys-56-Cys-92, Cys-59-Cys-68, and Cys-83-Cys-106.

The protein belongs to the beta-microseminoprotein family. Homodimer; Interacts with PI16.

It is found in the secreted. This chain is Beta-microseminoprotein (Msmb), found in Rattus norvegicus (Rat).